The sequence spans 70 residues: ATP synthase subunit c (70 aa).

The next 2 helical transmembrane spans lie at 4–24 (IAAG…DGIV) and 47–67 (FIGV…ALMV).

This sequence belongs to the ATPase C chain family. As to quaternary structure, F-type ATPases have 2 components, F(1) - the catalytic core - and F(0) - the membrane proton channel. F(1) has five subunits: alpha(3), beta(3), gamma(1), delta(1), epsilon(1). F(0) has three main subunits: a(1), b(2) and c(10-14). The alpha and beta chains form an alternating ring which encloses part of the gamma chain. F(1) is attached to F(0) by a central stalk formed by the gamma and epsilon chains, while a peripheral stalk is formed by the delta and b chains.

Its subcellular location is the cell membrane. In terms of biological role, f(1)F(0) ATP synthase produces ATP from ADP in the presence of a proton or sodium gradient. F-type ATPases consist of two structural domains, F(1) containing the extramembraneous catalytic core and F(0) containing the membrane proton channel, linked together by a central stalk and a peripheral stalk. During catalysis, ATP synthesis in the catalytic domain of F(1) is coupled via a rotary mechanism of the central stalk subunits to proton translocation. Functionally, key component of the F(0) channel; it plays a direct role in translocation across the membrane. A homomeric c-ring of between 10-14 subunits forms the central stalk rotor element with the F(1) delta and epsilon subunits. This Levilactobacillus brevis (strain ATCC 367 / BCRC 12310 / CIP 105137 / JCM 1170 / LMG 11437 / NCIMB 947 / NCTC 947) (Lactobacillus brevis) protein is ATP synthase subunit c.